The sequence spans 212 residues: Ribosomal RNA small subunit methyltransferase G (212 aa).

Residues phenylalanine 78, 96 to 98 (ESS), 124 to 125 (VE), and arginine 141 contribute to the S-adenosyl-L-methionine site.

This sequence belongs to the methyltransferase superfamily. RNA methyltransferase RsmG family.

Its subcellular location is the cytoplasm. Its function is as follows. Specifically methylates the N7 position of a guanine in 16S rRNA. The protein is Ribosomal RNA small subunit methyltransferase G of Onion yellows phytoplasma (strain OY-M).